Here is a 44-residue protein sequence, read N- to C-terminus: Protein Tat (44 aa).

Residues 1-44 form a disordered region; sequence APEDSQSHQVSLSKQPASQAGGDPTGPKESKKKVESETETDPVP. Positions 7 to 18 are enriched in polar residues; that stretch reads SHQVSLSKQPAS. Lys-14 is covalently cross-linked (Glycyl lysine isopeptide (Lys-Gly) (interchain with G-Cter in ubiquitin)). The Cell attachment site motif lies at 21 to 23; the sequence is GGD. Residues 26–36 show a composition bias toward basic and acidic residues; that stretch reads GPKESKKKVES.

Belongs to the lentiviruses Tat family. In terms of assembly, interacts with host CCNT1. Associates with the P-TEFb complex composed at least of Tat, P-TEFb (CDK9 and CCNT1), TAR RNA, RNA Pol II. Recruits the HATs CREBBP, TAF1/TFIID, EP300, PCAF and GCN5L2. Interacts with host KAT5/Tip60; this interaction targets the latter to degradation. Interacts with the host deacetylase SIRT1. Interacts with host capping enzyme RNGTT; this interaction stimulates RNGTT. Binds to host KDR, and to the host integrins ITGAV/ITGB3 and ITGA5/ITGB1. Interacts with host KPNB1/importin beta-1 without previous binding to KPNA1/importin alpha-1. Interacts with EIF2AK2. Interacts with host nucleosome assembly protein NAP1L1; this interaction may be required for the transport of Tat within the nucleus, since the two proteins interact at the nuclear rim. Interacts with host C1QBP/SF2P32; this interaction involves lysine-acetylated Tat. Interacts with the host chemokine receptors CCR2, CCR3 and CXCR4. Interacts with host DPP4/CD26; this interaction may trigger an anti-proliferative effect. Interacts with host LDLR. Interacts with the host extracellular matrix metalloproteinase MMP1. Interacts with host PRMT6; this interaction mediates Tat's methylation. Interacts with, and is ubiquitinated by MDM2/Hdm2. Interacts with host PSMC3 and HTATIP2. Interacts with STAB1; this interaction may overcome SATB1-mediated repression of IL2 and IL2RA (interleukin) in T cells by binding to the same domain than HDAC1. Interacts (when acetylated) with human CDK13, thereby increasing HIV-1 mRNA splicing and promoting the production of the doubly spliced HIV-1 protein Nef. In terms of processing, acetylation by EP300, CREBBP, GCN5L2/GCN5 and PCAF regulates the transactivation activity of Tat. Post-translationally, phosphorylated by EIF2AK2 on serine and threonine residues adjacent to the basic region important for TAR RNA binding and function. Phosphorylation of Tat by EIF2AK2 is dependent on the prior activation of EIF2AK2 by dsRNA. Asymmetrical arginine methylation by host PRMT6 seems to diminish the transactivation capacity of Tat and affects the interaction with host CCNT1. In terms of processing, polyubiquitination by MDM2 does not target Tat to degradation, but activates its transactivation function and fosters interaction with CCNT1 and TAR RNA.

The protein localises to the host nucleus. The protein resides in the host nucleolus. It is found in the host cytoplasm. It localises to the secreted. In terms of biological role, transcriptional activator that increases RNA Pol II processivity, thereby increasing the level of full-length viral transcripts. Recognizes a hairpin structure at the 5'-LTR of the nascent viral mRNAs referred to as the transactivation responsive RNA element (TAR) and recruits the cyclin T1-CDK9 complex (P-TEFb complex) that will in turn hyperphosphorylate the RNA polymerase II to allow efficient elongation. The CDK9 component of P-TEFb and other Tat-activated kinases hyperphosphorylate the C-terminus of RNA Pol II that becomes stabilized and much more processive. Other factors such as HTATSF1/Tat-SF1, SUPT5H/SPT5, and HTATIP2 are also important for Tat's function. Besides its effect on RNA Pol II processivity, Tat induces chromatin remodeling of proviral genes by recruiting the histone acetyltransferases (HATs) CREBBP, EP300 and PCAF to the chromatin. This also contributes to the increase in proviral transcription rate, especially when the provirus integrates in transcriptionally silent region of the host genome. To ensure maximal activation of the LTR, Tat mediates nuclear translocation of NF-kappa-B by interacting with host RELA. Through its interaction with host TBP, Tat may also modulate transcription initiation. Tat can reactivate a latently infected cell by penetrating in it and transactivating its LTR promoter. In the cytoplasm, Tat is thought to act as a translational activator of HIV-1 mRNAs. Functionally, extracellular circulating Tat can be endocytosed by surrounding uninfected cells via the binding to several surface receptors such as CD26, CXCR4, heparan sulfate proteoglycans (HSPG) or LDLR. Neurons are rarely infected, but they internalize Tat via their LDLR. Endosomal low pH allows Tat to cross the endosome membrane to enter the cytosol and eventually further translocate into the nucleus, thereby inducing severe cell dysfunctions ranging from cell activation to cell death. Through its interaction with nuclear HATs, Tat is potentially able to control the acetylation-dependent cellular gene expression. Tat seems to inhibit the HAT activity of KAT5/Tip60 and TAF1, and consequently modify the expression of specific cellular genes. Modulates the expression of many cellular genes involved in cell survival, proliferation or in coding for cytokines (such as IL10) or cytokine receptors. May be involved in the derepression of host interleukin IL2 expression. Mediates the activation of cyclin-dependent kinases and dysregulation of microtubule network. Tat plays a role in T-cell and neurons apoptosis. Tat induced neurotoxicity and apoptosis probably contribute to neuroAIDS. Host extracellular matrix metalloproteinase MMP1 cleaves Tat and decreases Tat's mediated neurotoxicity. Circulating Tat also acts as a chemokine-like and/or growth factor-like molecule that binds to specific receptors on the surface of the cells, affecting many cellular pathways. In the vascular system, Tat binds to ITGAV/ITGB3 and ITGA5/ITGB1 integrins dimers at the surface of endothelial cells and competes with bFGF for heparin-binding sites, leading to an excess of soluble bFGF. Binds to KDR/VEGFR-2. All these Tat-mediated effects enhance angiogenesis in Kaposi's sarcoma lesions. The sequence is that of Protein Tat from Human immunodeficiency virus type 1 group M subtype B (isolate BRVA) (HIV-1).